A 457-amino-acid chain; its full sequence is tRNA-2-methylthio-N(6)-dimethylallyladenosine synthase (457 aa).

In terms of domain architecture, MTTase N-terminal spans 3 to 120 (KKVYVKTFGC…LPQMIDARRE (118 aa)). Residues Cys12, Cys49, Cys83, Cys157, Cys161, and Cys164 each contribute to the [4Fe-4S] cluster site. A Radical SAM core domain is found at 143–377 (RVEGPSAFVS…QATIEENVAR (235 aa)). Residues 380 to 447 (QSMLGKVERI…PHSLRGELVL (68 aa)) form the TRAM domain.

Belongs to the methylthiotransferase family. MiaB subfamily. In terms of assembly, monomer. The cofactor is [4Fe-4S] cluster.

The protein localises to the cytoplasm. It catalyses the reaction N(6)-dimethylallyladenosine(37) in tRNA + (sulfur carrier)-SH + AH2 + 2 S-adenosyl-L-methionine = 2-methylsulfanyl-N(6)-dimethylallyladenosine(37) in tRNA + (sulfur carrier)-H + 5'-deoxyadenosine + L-methionine + A + S-adenosyl-L-homocysteine + 2 H(+). Catalyzes the methylthiolation of N6-(dimethylallyl)adenosine (i(6)A), leading to the formation of 2-methylthio-N6-(dimethylallyl)adenosine (ms(2)i(6)A) at position 37 in tRNAs that read codons beginning with uridine. This is tRNA-2-methylthio-N(6)-dimethylallyladenosine synthase from Burkholderia pseudomallei (strain 1710b).